A 158-amino-acid chain; its full sequence is Large ribosomal subunit protein uL15 (158 aa).

Residues 1–13 (MKLNEIKDNEGST) show a composition bias toward basic and acidic residues. The interval 1-44 (MKLNEIKDNEGSTHSRKRLGRGIGSGSGKTAGRGVKGQKSRSGV) is disordered. Residues 21–35 (RGIGSGSGKTAGRGV) are compositionally biased toward gly residues.

The protein belongs to the universal ribosomal protein uL15 family. As to quaternary structure, part of the 50S ribosomal subunit.

In terms of biological role, binds to the 23S rRNA. This is Large ribosomal subunit protein uL15 from Rhizobium etli (strain ATCC 51251 / DSM 11541 / JCM 21823 / NBRC 15573 / CFN 42).